Consider the following 319-residue polypeptide: MDWTAIKVITSSEAVEAVSYILTDMGAQGVQIEDAADFANLHEGKYGDHGEFIDPSSIPHRKNGAAVSGYFPQNVFVPELLPTIHQRVAKLREYGLNPGENDVSAATVDNQQWATVWQKYYHPLRVTDQLTIVPQWEEYQPADPKEKLIFLDPGMAFGTGTHPTTRLMLEALEKTIVGNEYVIDVGTGSGVLSIAAKHLGAGKVDAYDIDEVAVNSAKKNLALNPVAKDVKVGINSLLDGIHTKADLIVANILAEIIVPLIPQAYENLKPGGKFLVSGIIDDKAPLIRQKLQEQGFIIDDEQQMKDWHGMIAHKPTEVK.

S-adenosyl-L-methionine-binding residues include threonine 165, glycine 186, aspartate 208, and asparagine 251.

This sequence belongs to the methyltransferase superfamily. PrmA family.

It localises to the cytoplasm. It carries out the reaction L-lysyl-[protein] + 3 S-adenosyl-L-methionine = N(6),N(6),N(6)-trimethyl-L-lysyl-[protein] + 3 S-adenosyl-L-homocysteine + 3 H(+). Methylates ribosomal protein L11. The protein is Ribosomal protein L11 methyltransferase of Limosilactobacillus reuteri subsp. reuteri (strain JCM 1112) (Lactobacillus reuteri).